Consider the following 504-residue polypeptide: Alpha-L-arabinofuranosidase C (504 aa).

Residues asparagine 81, asparagine 152, asparagine 269, and asparagine 329 are each glycosylated (N-linked (GlcNAc...) asparagine).

The protein belongs to the glycosyl hydrolase 51 family.

The protein localises to the secreted. The catalysed reaction is Hydrolysis of terminal non-reducing alpha-L-arabinofuranoside residues in alpha-L-arabinosides.. It participates in glycan metabolism; L-arabinan degradation. Functionally, alpha-L-arabinofuranosidase involved in the degradation of arabinoxylan, a major component of plant hemicellulose. Acts only on small linear 1,5-alpha-linked L-arabinofuranosyl oligosaccharides. This chain is Alpha-L-arabinofuranosidase C (abfC), found in Emericella nidulans (strain FGSC A4 / ATCC 38163 / CBS 112.46 / NRRL 194 / M139) (Aspergillus nidulans).